The chain runs to 931 residues: DNA mismatch repair protein MutS (931 aa).

The segment covering 1–10 has biased composition (low complexity); that stretch reads MMDDTAMPAR. A disordered region spans residues 1 to 34; the sequence is MMDDTAMPARAEADAAEDELAAPAGIDRTAKADK. 674-681 lines the ATP pocket; that stretch reads GPNMAGKS.

It belongs to the DNA mismatch repair MutS family.

Its function is as follows. This protein is involved in the repair of mismatches in DNA. It is possible that it carries out the mismatch recognition step. This protein has a weak ATPase activity. The polypeptide is DNA mismatch repair protein MutS (Azorhizobium caulinodans (strain ATCC 43989 / DSM 5975 / JCM 20966 / LMG 6465 / NBRC 14845 / NCIMB 13405 / ORS 571)).